We begin with the raw amino-acid sequence, 230 residues long: Rab15 effector protein (230 aa).

G2 is lipidated: N-myristoyl glycine.

In terms of assembly, interacts with the GTP-bound form of RAB15, RAB3A-D and RAB34.

The protein localises to the early endosome membrane. In terms of biological role, effector that interacts with Rab GTPases in their active form (GTP-bound) including RAB15, RAB3A-D and RAB34. Controls downstream signaling such as cell proliferation and cell migration. Also regulates transferrin receptor recycling from the endocytic recycling compartment. The polypeptide is Rab15 effector protein (Mus musculus (Mouse)).